The following is a 764-amino-acid chain: Sesterfisherol synthase (764 aa).

Residues 2-331 (EVWEHSRPIA…SPRHHAWRNN (330 aa)) are terpene cyclase. Residue Asp-95 participates in Mg(2+) binding. Residues Asp-95, 187–190 (RRDD), Asn-231, 235–239 (SFDRE), and 324–325 (RH) contribute to the substrate site. Residues 95 to 99 (DDGYE) carry the DDXXD 1 motif. An NSE/DTE motif is present at residues 231 to 239 (NDYWSFDRE). The interval 332–759 (SRNGLKPANH…PMLRLLLEKL (428 aa)) is prenyltransferase. Positions 347 to 372 (LITPSNNLNSSKGSEEQMQDSDNGTR) are disordered. Over residues 348–358 (ITPSNNLNSSK) the composition is skewed to polar residues. Lys-476, Arg-479, and His-508 together coordinate isopentenyl diphosphate. Mg(2+) contacts are provided by Asp-515 and Asp-519. A DDXXD 2 motif is present at residues 515–519 (DDIED). Arg-524 is a binding site for dimethylallyl diphosphate. Arg-525 is an isopentenyl diphosphate binding site. Dimethylallyl diphosphate contacts are provided by Lys-602, Thr-603, Gln-638, Asn-645, Lys-655, and Lys-665.

It in the N-terminal section; belongs to the terpene synthase family. In the C-terminal section; belongs to the FPP/GGPP synthase family. As to quaternary structure, hexamer. Mg(2+) serves as cofactor.

It catalyses the reaction isopentenyl diphosphate + (2E,6E)-farnesyl diphosphate = (2E,6E,10E)-geranylgeranyl diphosphate + diphosphate. It carries out the reaction isopentenyl diphosphate + (2E,6E,10E)-geranylgeranyl diphosphate = (2E,6E,10E,14E)-geranylfarnesyl diphosphate + diphosphate. The enzyme catalyses (2E,6E,10E,14E)-geranylfarnesyl diphosphate + H2O = sesterfisherol + diphosphate. Its pathway is secondary metabolite biosynthesis; terpenoid biosynthesis. Bifunctional terpene synthase; part of the gene cluster that mediates the biosynthesis of sesterfisheric acid. The bifunctional terpene synthase NfSS converts dimethylallyl diphosphate (DMAPP) and isopentenyl diphosphate (IPP) into sesterfisherol. The C-terminal prenyltransferase (PT) domain of NfSS catalyzes formation of geranylfarnesyl pyrophosphate (GFPP), whereas the N-terminal terpene cyclase (TC) domain catalyzes the cyclization of GFPP to sesterfisherol. The cytochrome P450 monooxygenase NfP450 then catalyzes oxidative modifications of sesterfisherol into sesterfisheric acid. The sequence is that of Sesterfisherol synthase from Neosartorya fischeri (strain ATCC 1020 / DSM 3700 / CBS 544.65 / FGSC A1164 / JCM 1740 / NRRL 181 / WB 181) (Aspergillus fischerianus).